Here is a 142-residue protein sequence, read N- to C-terminus: UPF0102 protein PsycPRwf_0497 (142 aa).

Belongs to the UPF0102 family.

The chain is UPF0102 protein PsycPRwf_0497 from Psychrobacter sp. (strain PRwf-1).